Here is a 465-residue protein sequence, read N- to C-terminus: Lactaldehyde dehydrogenase (465 aa).

220-225 is a binding site for NAD(+); it reads GSVEIG. Active-site residues include Glu-240 and Cys-274.

It belongs to the aldehyde dehydrogenase family. As to quaternary structure, homotetramer.

It catalyses the reaction (S)-lactaldehyde + NAD(+) + H2O = (S)-lactate + NADH + 2 H(+). It functions in the pathway cofactor biosynthesis; coenzyme F420 biosynthesis. Functionally, involved in F420 biosynthesis through the oxidation of lactaldehyde to lactate. This Methanococcus maripaludis (strain C7 / ATCC BAA-1331) protein is Lactaldehyde dehydrogenase.